The following is a 211-amino-acid chain: Probable GTP-binding protein EngB (211 aa).

Residues 26-200 (SGIEIAFAGR…RQKLDDWFAA (175 aa)) enclose the EngB-type G domain. GTP is bound by residues 34–41 (GRSNAGKS), 61–65 (GRTRL), 79–82 (DLPG), 146–149 (TKAD), and 179–181 (FSS). 2 residues coordinate Mg(2+): serine 41 and threonine 63.

Belongs to the TRAFAC class TrmE-Era-EngA-EngB-Septin-like GTPase superfamily. EngB GTPase family. Mg(2+) serves as cofactor.

Its function is as follows. Necessary for normal cell division and for the maintenance of normal septation. This is Probable GTP-binding protein EngB from Sodalis glossinidius (strain morsitans).